Reading from the N-terminus, the 104-residue chain is L-rhamnose mutarotase (104 aa).

Tyr18 is a binding site for substrate. Catalysis depends on His22, which acts as the Proton donor. Residues Tyr41 and 76–77 (WW) each bind substrate.

This sequence belongs to the rhamnose mutarotase family. In terms of assembly, homodimer.

The protein localises to the cytoplasm. It catalyses the reaction alpha-L-rhamnose = beta-L-rhamnose. The protein operates within carbohydrate metabolism; L-rhamnose metabolism. Functionally, involved in the anomeric conversion of L-rhamnose. This chain is L-rhamnose mutarotase, found in Lactiplantibacillus plantarum (strain ATCC BAA-793 / NCIMB 8826 / WCFS1) (Lactobacillus plantarum).